Consider the following 1343-residue polypeptide: DNA-directed RNA polymerase subunit beta (1343 aa).

The protein belongs to the RNA polymerase beta chain family. The RNAP catalytic core consists of 2 alpha, 1 beta, 1 beta' and 1 omega subunit. When a sigma factor is associated with the core the holoenzyme is formed, which can initiate transcription.

The catalysed reaction is RNA(n) + a ribonucleoside 5'-triphosphate = RNA(n+1) + diphosphate. DNA-dependent RNA polymerase catalyzes the transcription of DNA into RNA using the four ribonucleoside triphosphates as substrates. This Shewanella woodyi (strain ATCC 51908 / MS32) protein is DNA-directed RNA polymerase subunit beta.